The primary structure comprises 215 residues: CASP-like protein 1U3 (215 aa).

Residues 1-13 are Cytoplasmic-facing; that stretch reads MHDEEKKEPKWVT. A helical membrane pass occupies residues 14–34; sequence AVSIAGRIAGMGLAVAAAVLM. Residues 35 to 68 are Extracellular-facing; sequence STASQCTVYYAAPAASAYGGAARARTVTYSDFPP. A helical transmembrane segment spans residues 69–89; that stretch reads FVFLVGAASIAAFLEAIAIFL. The Cytoplasmic segment spans residues 90–105; that stretch reads VVWKKGKDKTTKVLMP. The chain crosses the membrane as a helical span at residues 106–126; sequence LLGVAVPALLYSATGAAFAAV. The Extracellular segment spans residues 127-161; that stretch reads SDMSYCSANGKRVSICAGSAAAGGGVSGGTNFCSQ. A helical transmembrane segment spans residues 162-182; the sequence is VHIAVYLSLAAAVAVSVAEVV. Over 183-215 the chain is Cytoplasmic; sequence RGLGGSASGGGSDSDSSSSSESGGCDHGCHHKH. A disordered region spans residues 187-215; that stretch reads GSASGGGSDSDSSSSSESGGCDHGCHHKH. Positions 195-205 are enriched in low complexity; the sequence is DSDSSSSSESG.

Belongs to the Casparian strip membrane proteins (CASP) family. Homodimer and heterodimers.

It is found in the cell membrane. The sequence is that of CASP-like protein 1U3 from Sorghum bicolor (Sorghum).